The primary structure comprises 719 residues: Glycine--tRNA ligase beta subunit (719 aa).

Residues 65–84 (PDREEEIKGPPAKAAFKDGK) form a disordered region.

Belongs to the class-II aminoacyl-tRNA synthetase family. As to quaternary structure, tetramer of two alpha and two beta subunits.

Its subcellular location is the cytoplasm. The catalysed reaction is tRNA(Gly) + glycine + ATP = glycyl-tRNA(Gly) + AMP + diphosphate. This chain is Glycine--tRNA ligase beta subunit, found in Trichodesmium erythraeum (strain IMS101).